A 236-amino-acid chain; its full sequence is Concanavalin-Ma (236 aa).

Glu8 and Asp10 together coordinate Mn(2+). Residues Asp10, Tyr12, Asn14, and Asp19 each contribute to the Ca(2+) site. Tyr12 contributes to the a carbohydrate binding site. The Mn(2+) site is built by Asp19 and His24. 98–99 (LY) serves as a coordination point for a carbohydrate. Residue Asp207 participates in Ca(2+) binding. An a carbohydrate-binding site is contributed by Arg227.

The protein belongs to the leguminous lectin family. As to quaternary structure, homotetramer.

In terms of biological role, glucose/D-mannose specific lectin. The polypeptide is Concanavalin-Ma (Canavalia rosea (Beach bean)).